The primary structure comprises 221 residues: Early nodulin-like protein 4 (221 aa).

A signal peptide spans 1–21; it reads MVFVKMTDVYLMIVMLMGLGF. Positions 29-130 constitute a Phytocyanin domain; that stretch reads HKFYVGGRDG…GQKLAVTVMS (102 aa). N-linked (GlcNAc...) asparagine glycosylation is found at Asn-59 and Asn-85. A disulfide bridge links Cys-84 with Cys-118. The disordered stretch occupies residues 130–185; that stretch reads STGHHSHTPRHPSPSPSPSASPVRKALLSPAPIPVHKALSSPAPTPGVDPSHSEVL. A lipid anchor (GPI-anchor amidated asparagine) is attached at Asn-197. Residues 198–221 constitute a propeptide, removed in mature form; that stretch reads LAGSVAPGVISLGLVLVIMISSMV.

This sequence belongs to the early nodulin-like (ENODL) family. Confined to flowers.

It localises to the cell membrane. May act as a carbohydrate transporter. The polypeptide is Early nodulin-like protein 4 (Arabidopsis thaliana (Mouse-ear cress)).